A 239-amino-acid polypeptide reads, in one-letter code: Norbelladine 4'-O-methyltransferase (239 aa).

Residues V55, E77, 79–80, S85, D103, and A132 contribute to the S-adenosyl-L-methionine site; that span reads GV. D155 provides a ligand contact to a divalent metal cation. D157 is an S-adenosyl-L-methionine binding site. 2 residues coordinate a divalent metal cation: D181 and N182.

Belongs to the class I-like SAM-binding methyltransferase superfamily. Cation-dependent O-methyltransferase family. Requires Mg(2+) as cofactor. In terms of tissue distribution, mostly expressed in bulbs, and, to a lower extent, in stems and roots.

The catalysed reaction is norbelladine + S-adenosyl-L-methionine = 4'-O-methylnorbelladine + S-adenosyl-L-homocysteine + H(+). The protein operates within alkaloid biosynthesis. Functionally, 4'-O-methyltransferase converting norbelladine to 4'-O-methylnorbelladine. 4'-O-methylnorbelladine is a precursor to all Amaryllidaceae alkaloids such as galanthamine, lycorine and haemanthamine, and including haemanthamine- and crinamine-type alkaloids, promising anticancer agents. The chain is Norbelladine 4'-O-methyltransferase from Narcissus pseudonarcissus (Daffodil).